We begin with the raw amino-acid sequence, 476 residues long: MANSTKAEEYEKMSVEQAKASVNSEAESSFSINENTTASGTGLSGKTSVCRQVDTARKRKEFEDDLVKESSSCGEGTPSKKRKLDPEIVPEEKDCGDDEGNSKKRKRETEDVPKDEYSTGDGTQNKRKIALEDVPEKQKNLEEGHSSAVAAHYNELQEVGLEKRSQSRIFYLRNFNNWMKSVLIGEFLEKVRQKKKRDITVLDLGCGKGGDLLKWKKGRINKLVCTDIADVSIKQCQQRYEDMKNRRDSEYIFSAEFITADCSKELLIEKFRDPQMCFDICSCQFVCHYSFESYEQADMMLRNACERLSPGGYFIGTTPNSFELIRRLEASETESFGNEIYTVKFQKKGDYPLFGCKYDFNLEGVVDVPEFLVYFPLLNEMAKKYNMKLVYKKTFLEFYEEKIKNNENKMLLKRMQALEPYPANESSKLVSERVDDYEHAAKYMKNSQVKLPLGTLSKSEWEATSIYLVFAFEKQQ.

Basic and acidic residues predominate over residues 1–14 (MANSTKAEEYEKMS). Positions 1-128 (MANSTKAEEY…TGDGTQNKRK (128 aa)) are disordered. The span at 20 to 50 (ASVNSEAESSFSINENTTASGTGLSGKTSVC) shows a compositional bias: polar residues. Ser24, Ser28, and Ser29 each carry phosphoserine. Composition is skewed to basic and acidic residues over residues 54–68 (DTAR…DLVK), 84–93 (LDPEIVPEEK), and 107–117 (RETEDVPKDEY). Ser118 is modified (phosphoserine). Residues 126 to 128 (KRK) carry the Nuclear localization signal motif. Residues 167-475 (SRIFYLRNFN…IYLVFAFEKQ (309 aa)) enclose the mRNA cap 0 methyltransferase domain. 176–177 (NN) contributes to the mRNA binding site. S-adenosyl-L-methionine is bound by residues Lys180, Gly205, Asp227, Asp261, Gln284, and Tyr289.

This sequence belongs to the class I-like SAM-binding methyltransferase superfamily. mRNA cap 0 methyltransferase family. Interacts with importin alpha, leading to stimulate both RNA-binding and methyltransferase activity. Interaction with importin alpha and beta is required for its nuclear localization, importin beta dissociating in response to RanGTP, allowing RNMT-importin alpha to bind RNA substrates. Interacts with elongating form of polymerase II and RNGTT. Interacts with RAMAC, this interaction significantly enhances RNA-binding and cap methyltransferase activity.

It is found in the nucleus. The catalysed reaction is a 5'-end (5'-triphosphoguanosine)-ribonucleoside in mRNA + S-adenosyl-L-methionine = a 5'-end (N(7)-methyl 5'-triphosphoguanosine)-ribonucleoside in mRNA + S-adenosyl-L-homocysteine. Its activity is regulated as follows. Methyltransferase activity is activated by RAMAC. Its function is as follows. Catalytic subunit of the mRNA-capping methyltransferase RNMT:RAMAC complex that methylates the N7 position of the added guanosine to the 5'-cap structure of mRNAs. Binds RNA containing 5'-terminal GpppC. The sequence is that of mRNA cap guanine-N(7) methyltransferase (RNMT) from Macaca fascicularis (Crab-eating macaque).